The primary structure comprises 212 residues: Ras-related protein Rab-2A (212 aa).

GTP contacts are provided by Gly16, Val17, Gly18, Lys19, Ser20, Cys21, and Thr38. Ser20 contributes to the Mg(2+) binding site. Positions Leu37–Glu42 match the Switch 1 motif. Residues Thr38 and Asp61 each contribute to the Mg(2+) site. The Switch 2 motif lies at Ala63 to Thr72. GTP-binding residues include Gly64, Asn119, Lys120, Asp122, Ala150, and Lys151. Residues Cys211 and Cys212 are each lipidated (S-geranylgeranyl cysteine).

This sequence belongs to the small GTPase superfamily. Rab family. Interacts with PRKCI. Interacts with TRIP11. Interacts (in GTP-bound form) with GARIN1B. Mg(2+) serves as cofactor. Post-translationally, prenylated. Prenylation is required for association with cellular membranes.

It localises to the endoplasmic reticulum-Golgi intermediate compartment membrane. The protein localises to the melanosome. Its subcellular location is the endoplasmic reticulum membrane. It is found in the golgi apparatus membrane. The protein resides in the cytoplasmic vesicle. It localises to the secretory vesicle. The protein localises to the acrosome. It carries out the reaction GTP + H2O = GDP + phosphate + H(+). With respect to regulation, regulated by guanine nucleotide exchange factors (GEFs) which promote the exchange of bound GDP for free GTP, GTPase activating proteins (GAPs) which increase the GTP hydrolysis activity, and GDP dissociation inhibitors (GDIs) which inhibit the dissociation of the nucleotide from the GTPase. The small GTPases Rab are key regulators of intracellular membrane trafficking, from the formation of transport vesicles to their fusion with membranes. Rabs cycle between active GTP-bound and inactive GDP-bound states. In their active state, drive transport of vesicular carriers from donor organelles to acceptor organelles to regulate the membrane traffic that maintains organelle identity and morphology. RAB2A regulates autophagy by promoting autophagosome-lysosome fusion via recruitment of the HOPS endosomal tethering complex; this process involves autophagosomal RAB2A and lysosomal RAB39A recruitment of HOPS subcomplexes VPS39-VPS11 and VPS41-VPS16-VPS18-VPS33A, respectively, which assemble into a functional complex to mediate membrane tethering and SNAREs-driven membrane fusion. Required for protein transport from the endoplasmic reticulum to the Golgi complex. Regulates the compacted morphology of the Golgi. Together with RAB2B, redundantly required for efficient autophagic flux. This chain is Ras-related protein Rab-2A (RAB2A), found in Gallus gallus (Chicken).